The sequence spans 426 residues: Serine--tRNA ligase (426 aa).

Residues 37-63 form a disordered region; the sequence is RKSVQTRTEQLQAERNARSKSIGQAKA. 233 to 235 contributes to the L-serine binding site; it reads TAE. ATP is bound at residue 264–266; sequence RSE. L-serine is bound at residue E287. An ATP-binding site is contributed by 351-354; that stretch reads EISS. S387 lines the L-serine pocket.

This sequence belongs to the class-II aminoacyl-tRNA synthetase family. Type-1 seryl-tRNA synthetase subfamily. Homodimer. The tRNA molecule binds across the dimer.

It localises to the cytoplasm. The catalysed reaction is tRNA(Ser) + L-serine + ATP = L-seryl-tRNA(Ser) + AMP + diphosphate + H(+). It carries out the reaction tRNA(Sec) + L-serine + ATP = L-seryl-tRNA(Sec) + AMP + diphosphate + H(+). It participates in aminoacyl-tRNA biosynthesis; selenocysteinyl-tRNA(Sec) biosynthesis; L-seryl-tRNA(Sec) from L-serine and tRNA(Sec): step 1/1. Its function is as follows. Catalyzes the attachment of serine to tRNA(Ser). Is also able to aminoacylate tRNA(Sec) with serine, to form the misacylated tRNA L-seryl-tRNA(Sec), which will be further converted into selenocysteinyl-tRNA(Sec). The chain is Serine--tRNA ligase from Pseudomonas entomophila (strain L48).